We begin with the raw amino-acid sequence, 177 residues long: O-acetyl-ADP-ribose deacetylase (177 aa).

In terms of domain architecture, Macro spans 1–175; sequence MKTRIHVVQG…LYERLLTQQG (175 aa). Residues 11-12, Asn-25, 33-35, and 122-126 each bind substrate; these read DI, GVD, and STGVY. Asp-35 serves as the catalytic Proton acceptor.

Belongs to the MacroD-type family. YmdB subfamily. In terms of assembly, homodimer. Interacts with RNase III.

It carries out the reaction 3''-O-acetyl-ADP-D-ribose + H2O = ADP-D-ribose + acetate + H(+). The catalysed reaction is 2''-O-acetyl-ADP-D-ribose + H2O = ADP-D-ribose + acetate + H(+). In terms of biological role, deacetylates O-acetyl-ADP ribose to yield ADP-ribose and free acetate. Down-regulates ribonuclease 3 (RNase III) activity. Acts by interacting directly with the region of the ribonuclease that is required for dimerization/activation. This chain is O-acetyl-ADP-ribose deacetylase, found in Escherichia coli O157:H7.